Reading from the N-terminus, the 148-residue chain is MLQNYAIVLGMAVAVAIWYFFKIEEEAPPGPNPPKPDPPKPDPPKMHMPKKKPHWMDPHLTGSQTVQYSRNRSMGDPIRGDLPIIPRDDGWFSTAANPAHTLHAGALSMIAPASTGGGLTVNKLISAYADKGNAMSGRHNSPSYYGSS.

The chain crosses the membrane as a helical span at residues 1–21; that stretch reads MLQNYAIVLGMAVAVAIWYFF. The tract at residues 27 to 61 is disordered; that stretch reads APPGPNPPKPDPPKPDPPKMHMPKKKPHWMDPHLT.

It is found in the host membrane. This is an uncharacterized protein from Frog virus 3 (isolate Goorha) (FV-3).